The primary structure comprises 231 residues: MNKQRGTFSEVSLAQDPKRQQRKPKDNKSSISGTKQEIFQVELNLQNPSLNHQGIDQIYDCQGLLPPPEKLTAEVLGIICIVLMATVLKTVVLIPFLEQNNSFPNTRTQKVRHCGHCPEEWITYSNSCYYIGKEKRTWAESLLACTSKNSSLLSIDNEEEMKFLTAISPSTWTGVFRDSSHHPWVTINGLTFKHEIKDSDHAEYNCAMLHLDRLKSVQCGSSKRYYCKHKL.

Polar residues predominate over residues 1–12; that stretch reads MNKQRGTFSEVS. Positions 1 to 31 are disordered; the sequence is MNKQRGTFSEVSLAQDPKRQQRKPKDNKSSI. At 1 to 70 the chain is on the cytoplasmic side; it reads MNKQRGTFSE…CQGLLPPPEK (70 aa). Basic and acidic residues predominate over residues 16–28; that stretch reads DPKRQQRKPKDNK. A helical; Signal-anchor for type II membrane protein transmembrane segment spans residues 71 to 93; sequence LTAEVLGIICIVLMATVLKTVVL. The Extracellular portion of the chain corresponds to 94 to 231; that stretch reads IPFLEQNNSF…SKRYYCKHKL (138 aa). A glycan (N-linked (GlcNAc...) asparagine) is linked at N100. The 114-residue stretch at 116 to 229 folds into the C-type lectin domain; the sequence is HCPEEWITYS…GSSKRYYCKH (114 aa). Intrachain disulfides connect C117/C128, C145/C227, and C206/C219. The N-linked (GlcNAc...) asparagine glycan is linked to N149.

In terms of assembly, heterodimer with KLRD1; disulfide-linked. KLRD1-KLRC2 receptor complex interacts with TYROBP/DAP12 homodimer; this interaction is necessary for the expression on the cell surface. Natural killer cells.

The protein localises to the cell membrane. Its function is as follows. Immune activating receptor involved in self-nonself discrimination. In complex with KLRD1 on cytotoxic lymphocyte subsets, recognizes non-classical major histocompatibility MHC-E loaded with signal sequence-derived peptides from non-classical MHC-G molecules, likely playing a role in the generation and effector functions of adaptive natural killer (NK) cells and in maternal-fetal tolerance during pregnancy. Regulates the effector functions of terminally differentiated cytotoxic lymphocyte subsets, and in particular may play a role in adaptive NK cell response to viral infection. Upon MHC-E-peptide binding, transmits intracellular signals via the adapter protein TYROBP/DAP12, triggering the phosphorylation of proximal signaling molecules and cell activation. This chain is NKG2-C type II integral membrane protein (KLRC2), found in Macaca mulatta (Rhesus macaque).